A 267-amino-acid polypeptide reads, in one-letter code: Small ribosomal subunit protein uS2 (267 aa).

The interval 232-267 is disordered; that stretch reads ATVREEEFADAPAEDAKPARRAPAKKAAADKGEAQA. Residues 258–267 show a composition bias toward basic and acidic residues; it reads AAADKGEAQA.

It belongs to the universal ribosomal protein uS2 family.

This is Small ribosomal subunit protein uS2 from Stenotrophomonas maltophilia (strain R551-3).